The sequence spans 513 residues: ATP synthase subunit alpha (513 aa).

169–176 provides a ligand contact to ATP; it reads GDRQTGKT.

This sequence belongs to the ATPase alpha/beta chains family. In terms of assembly, F-type ATPases have 2 components, CF(1) - the catalytic core - and CF(0) - the membrane proton channel. CF(1) has five subunits: alpha(3), beta(3), gamma(1), delta(1), epsilon(1). CF(0) has three main subunits: a(1), b(2) and c(9-12). The alpha and beta chains form an alternating ring which encloses part of the gamma chain. CF(1) is attached to CF(0) by a central stalk formed by the gamma and epsilon chains, while a peripheral stalk is formed by the delta and b chains.

The protein localises to the cell inner membrane. The enzyme catalyses ATP + H2O + 4 H(+)(in) = ADP + phosphate + 5 H(+)(out). Produces ATP from ADP in the presence of a proton gradient across the membrane. The alpha chain is a regulatory subunit. The protein is ATP synthase subunit alpha of Bordetella bronchiseptica (strain ATCC BAA-588 / NCTC 13252 / RB50) (Alcaligenes bronchisepticus).